A 347-amino-acid polypeptide reads, in one-letter code: Phosphoribosylformylglycinamidine cyclo-ligase (347 aa).

This sequence belongs to the AIR synthase family.

It localises to the cytoplasm. It catalyses the reaction 2-formamido-N(1)-(5-O-phospho-beta-D-ribosyl)acetamidine + ATP = 5-amino-1-(5-phospho-beta-D-ribosyl)imidazole + ADP + phosphate + H(+). It functions in the pathway purine metabolism; IMP biosynthesis via de novo pathway; 5-amino-1-(5-phospho-D-ribosyl)imidazole from N(2)-formyl-N(1)-(5-phospho-D-ribosyl)glycinamide: step 2/2. In Alcanivorax borkumensis (strain ATCC 700651 / DSM 11573 / NCIMB 13689 / SK2), this protein is Phosphoribosylformylglycinamidine cyclo-ligase.